The sequence spans 444 residues: ATP-dependent protease ATPase subunit HslU (444 aa).

Residues Ile-18, 60–65 (GVGKTE), Asp-256, Glu-321, and Arg-393 each bind ATP.

This sequence belongs to the ClpX chaperone family. HslU subfamily. In terms of assembly, a double ring-shaped homohexamer of HslV is capped on each side by a ring-shaped HslU homohexamer. The assembly of the HslU/HslV complex is dependent on binding of ATP.

The protein localises to the cytoplasm. ATPase subunit of a proteasome-like degradation complex; this subunit has chaperone activity. The binding of ATP and its subsequent hydrolysis by HslU are essential for unfolding of protein substrates subsequently hydrolyzed by HslV. HslU recognizes the N-terminal part of its protein substrates and unfolds these before they are guided to HslV for hydrolysis. This chain is ATP-dependent protease ATPase subunit HslU, found in Buchnera aphidicola subsp. Baizongia pistaciae (strain Bp).